The following is a 541-amino-acid chain: EH domain-containing protein 4 (541 aa).

The residue at position 1 (Met-1) is an N-acetylmethionine. The segment at 1 to 20 is disordered; it reads MFSWMGRQAGGRERSGGMDA. Ser-15 is modified (phosphoserine). The 232-residue stretch at 58 to 289 folds into the Dynamin-type G domain; sequence FENKPMILLV…DLFRDIQSLP (232 aa). The segment at 68–75 is G1 motif; the sequence is GQYSTGKT. 68 to 75 lines the ATP pocket; it reads GQYSTGKT. Residues 94 to 95 are G2 motif; it reads EP. A G3 motif region spans residues 156–159; sequence DSPG. Phosphoserine is present on Ser-162. The tract at residues 222 to 225 is G4 motif; that stretch reads NKAD. Lys-223 contributes to the ATP binding site. Val-246 is a region of interest (G5 motif). Trp-261 contributes to the ATP binding site. Positions 447 to 535 constitute an EH domain; it reads DKPVYDELFY…PHLVPPSHRK (89 aa). Tyr-451 is subject to Phosphotyrosine. At Ser-459 the chain carries Phosphoserine. The EF-hand domain occupies 479-514; the sequence is LPNSVLGKIWKLADCDCDGMLDEEEFALAKHLIKIK. Ca(2+) contacts are provided by Asp-492, Asp-494, Asp-496, Met-498, and Glu-503.

This sequence belongs to the TRAFAC class dynamin-like GTPase superfamily. Dynamin/Fzo/YdjA family. EHD subfamily. As to quaternary structure, homooligomer, and heterooligomer with EHD1, EHD2 and EHD3. Forms a complex with EHD4 and MICALL1; the complex controls CDH5 trafficking and coordinates angiogenesis.

Its subcellular location is the early endosome membrane. It is found in the recycling endosome membrane. It localises to the cell membrane. The protein localises to the cell junction. The protein resides in the adherens junction. Functionally, ATP- and membrane-binding protein that probably controls membrane reorganization/tubulation upon ATP hydrolysis. Plays a role in early endosomal transport. During sprouting angiogenesis, in complex with PACSIN2 and MICALL1, forms recycling endosome-like tubular structure at asymmetric adherens junctions to control CDH5 trafficking. The sequence is that of EH domain-containing protein 4 from Mus musculus (Mouse).